The following is a 381-amino-acid chain: Choline transport ATP-binding protein OpuBA (381 aa).

Residues 2 to 236 (LTLENVSKTY…PADEFVEEFI (235 aa)) enclose the ABC transporter domain. 35 to 42 (GPSGCGKT) provides a ligand contact to ATP. 2 consecutive CBS domains span residues 256 to 314 (MNTQ…LVSE) and 316 to 374 (LHED…WGEE).

Belongs to the ABC transporter superfamily.

Its function is as follows. Involved in a high affinity multicomponent binding-protein-dependent transport system for choline. Probably responsible for energy coupling to the transport system. This is Choline transport ATP-binding protein OpuBA (opuBA) from Bacillus subtilis (strain 168).